Consider the following 391-residue polypeptide: RNA-binding motif protein, X chromosome (391 aa).

An N-acetylmethionine; in Heterogeneous nuclear ribonucleoprotein G; alternate modification is found at Met1. Residue Val2 is modified to N-acetylvaline; in Heterogeneous nuclear ribonucleoprotein G, N-terminally processed. The region spanning Gly8–Lys86 is the RRM domain. Lys22 is covalently cross-linked (Glycyl lysine isopeptide (Lys-Gly) (interchain with G-Cter in SUMO2)). At Lys30 the chain carries N6-acetyllysine. Residues Asp61–Lys80 show a composition bias toward basic and acidic residues. The tract at residues Asp61 to Tyr391 is disordered. Residues Lys80 and Lys86 each participate in a glycyl lysine isopeptide (Lys-Gly) (interchain with G-Cter in SUMO2) cross-link. A phosphoserine mark is found at Ser88 and Ser91. The span at Leu109–Arg120 shows a compositional bias: gly residues. 3 positions are modified to omega-N-methylarginine: Arg125, Arg144, and Arg164. Over residues Arg151–Arg164 the composition is skewed to pro residues. Phosphoserine is present on Ser165. An Omega-N-methylarginine modification is found at Arg172. The residue at position 174 (Ser174) is a Phosphoserine. Residues Gly186–Pro236 are necessary for the association to nascent RNAPII transcripts and nuclear localization. Basic and acidic residues-rich tracts occupy residues Pro194 to Ser215 and Tyr241 to Asp274. 5 positions are modified to phosphoserine: Ser261, Ser328, Ser329, Ser330, and Ser332. Residues Ser323 to Ser337 are compositionally biased toward low complexity. The interval Asp333–Tyr391 is necessary for RNA-binding. Positions Gly338–Arg347 are enriched in basic and acidic residues. Ser352 carries the post-translational modification Phosphoserine. The segment covering Asp362 to Ala371 has biased composition (low complexity). Basic and acidic residues predominate over residues Ser380 to Tyr391.

In terms of assembly, homomultimer. Found in the supraspliceosome complex. Identified in the spliceosome C complex. Forms a complex with ILF2, ILF3, YLPM1, KHDRBS1, NCOA5 and PPP1CA. Interacts with CLK2, KHDRBS2, KHDRBS3, SAFB/SAFB1, TRA2B and YTHDC1. Interacts with ERAP1; the interaction is RNA-independent. Interacts with PPIA/CYPA. In terms of processing, O-glycosylated. Post-translationally, arg-185 is dimethylated, probably to asymmetric dimethylarginine.

It localises to the nucleus. Its function is as follows. RNA-binding protein that plays several role in the regulation of pre- and post-transcriptional processes. Implicated in tissue-specific regulation of gene transcription and alternative splicing of several pre-mRNAs. Binds to and stimulates transcription from the tumor suppressor TXNIP gene promoter; may thus be involved in tumor suppression. When associated with SAFB, binds to and stimulates transcription from the SREBF1 promoter. Associates with nascent mRNAs transcribed by RNA polymerase II. Component of the supraspliceosome complex that regulates pre-mRNA alternative splice site selection. Can either activate or suppress exon inclusion; acts additively with TRA2B to promote exon 7 inclusion of the survival motor neuron SMN2. Represses the splicing of MAPT/Tau exon 10. Binds preferentially to single-stranded 5'-CC[A/C]-rich RNA sequence motifs localized in a single-stranded conformation; probably binds RNA as a homodimer. Binds non-specifically to pre-mRNAs. Also plays a role in the cytoplasmic TNFR1 trafficking pathways; promotes both the IL-1-beta-mediated inducible proteolytic cleavage of TNFR1 ectodomains and the release of TNFR1 exosome-like vesicles to the extracellular compartment. This is RNA-binding motif protein, X chromosome (RBMX) from Pan troglodytes (Chimpanzee).